Consider the following 125-residue polypeptide: 17 kDa gas vesicle protein (125 aa).

The protein belongs to the gas vesicle GvpC family.

Its subcellular location is the gas vesicle. Its function is as follows. Gas vesicles (GV) are hollow, gas filled proteinaceous nanostructures. During planktonic growth they allow positioning of the organism at a favorable depth for light or nutrient acquisition. This Dactylococcopsis salina (strain PCC 8305) (Myxobactron salinum) protein is 17 kDa gas vesicle protein.